A 266-amino-acid chain; its full sequence is 5'-nucleotidase SurE (266 aa).

Positions 10, 11, 41, and 97 each coordinate a divalent metal cation.

The protein belongs to the SurE nucleotidase family. A divalent metal cation is required as a cofactor.

The protein resides in the cytoplasm. It catalyses the reaction a ribonucleoside 5'-phosphate + H2O = a ribonucleoside + phosphate. Nucleotidase that shows phosphatase activity on nucleoside 5'-monophosphates. This Methanocella arvoryzae (strain DSM 22066 / NBRC 105507 / MRE50) protein is 5'-nucleotidase SurE.